A 234-amino-acid chain; its full sequence is Triosephosphate isomerase (234 aa).

8–10 (NFK) lines the substrate pocket. His-90 serves as the catalytic Electrophile. The active-site Proton acceptor is Glu-159. The substrate site is built by Gly-165 and Ser-197.

It belongs to the triosephosphate isomerase family. Homodimer.

Its subcellular location is the cytoplasm. The catalysed reaction is D-glyceraldehyde 3-phosphate = dihydroxyacetone phosphate. It participates in carbohydrate biosynthesis; gluconeogenesis. The protein operates within carbohydrate degradation; glycolysis; D-glyceraldehyde 3-phosphate from glycerone phosphate: step 1/1. Involved in the gluconeogenesis. Catalyzes stereospecifically the conversion of dihydroxyacetone phosphate (DHAP) to D-glyceraldehyde-3-phosphate (G3P). The protein is Triosephosphate isomerase of Helicobacter pylori (strain J99 / ATCC 700824) (Campylobacter pylori J99).